The chain runs to 450 residues: tRNA (guanine-N(7)-)-methyltransferase non-catalytic subunit TRM82 (450 aa).

The segment covering 69–82 has biased composition (basic and acidic residues); that stretch reads AAKKLKTNEGEAIE. The interval 69 to 103 is disordered; it reads AAKKLKTNEGEAIERPGNQRRVPLPGKDPKVPVPG. WD repeat units follow at residues 108–147, 200–241, and 245–285; these read PVYQ…KDNC, GHVS…VIDK, and GHKE…LMSS.

Belongs to the WD repeat TRM82 family. In terms of assembly, forms a heterodimer with the catalytic subunit TRM8.

It is found in the nucleus. The protein operates within tRNA modification; N(7)-methylguanine-tRNA biosynthesis. Its function is as follows. Required for the formation of N(7)-methylguanine at position 46 (m7G46) in tRNA. In the complex, it is required to stabilize and induce conformational changes of the catalytic subunit. In Eremothecium gossypii (strain ATCC 10895 / CBS 109.51 / FGSC 9923 / NRRL Y-1056) (Yeast), this protein is tRNA (guanine-N(7)-)-methyltransferase non-catalytic subunit TRM82.